The primary structure comprises 46 residues: Iota-conotoxin-like r11b (46 aa).

A 4-hydroxyproline mark is found at proline 2 and proline 11. 4 disulfides stabilise this stretch: cysteine 5–cysteine 19, cysteine 12–cysteine 22, cysteine 18–cysteine 27, and cysteine 21–cysteine 38. At proline 29 the chain carries 4-hydroxyproline. Phenylalanine 44 carries the post-translational modification D-phenylalanine.

The natural D-Phe form of the peptide is more potent than the synthetic L-Phe form. As to expression, expressed by the venom duct.

It localises to the secreted. Its function is as follows. Iota-conotoxins bind to voltage-gated sodium channels (Nav) and act as agonists by shifting the voltage-dependence of activation to more hyperpolarized levels. Produces excitatory symptoms when injected intracranially into mice and is lethal at higher doses. Exposure to frog cutaneous pectoris induces spontaneous and repetitive action potentials. This effect is slowly reversible. Natural peptide (with D-Phe) is active on nerve, but not on muscle. Synthetic peptide (with L-Phe) is not active on both nerve and muscle. This chain is Iota-conotoxin-like r11b, found in Conus radiatus (Rayed cone).